We begin with the raw amino-acid sequence, 469 residues long: Protein POLLENLESS 3-LIKE 1 (469 aa).

A disordered region spans residues 1–20; sequence MRRRESRGAKGGGFLTPPPS. TPR repeat units lie at residues 88–121, 124–157, and 184–217; these read DSAL…CPFE, DSID…LEQD, and ARIL…EPDN. Residues 139-191 adopt a coiled-coil conformation; the sequence is RITEVAELLEHKLRTLEQDKHYGGRIKIAKRSHEEQNNKTIEQEKARILGNLA. Residues 314–338 are compositionally biased toward polar residues; the sequence is NIHKTNSHASSESVEQNSPGLTTQP. Residues 314–339 are disordered; the sequence is NIHKTNSHASSESVEQNSPGLTTQPR.

Belongs to the MS5 protein family. Expressed in floral and vegetative organs. Also barely detectable in leaves and stems.

Its subcellular location is the nucleus. Probably involved in the regulation of cell division. The chain is Protein POLLENLESS 3-LIKE 1 from Arabidopsis thaliana (Mouse-ear cress).